We begin with the raw amino-acid sequence, 353 residues long: Uroporphyrinogen decarboxylase (353 aa).

Substrate-binding positions include 30–34 (RQAGR), D79, Y154, S209, and H332.

It belongs to the uroporphyrinogen decarboxylase family. Homodimer.

The protein resides in the cytoplasm. It catalyses the reaction uroporphyrinogen III + 4 H(+) = coproporphyrinogen III + 4 CO2. It functions in the pathway porphyrin-containing compound metabolism; protoporphyrin-IX biosynthesis; coproporphyrinogen-III from 5-aminolevulinate: step 4/4. Catalyzes the decarboxylation of four acetate groups of uroporphyrinogen-III to yield coproporphyrinogen-III. The protein is Uroporphyrinogen decarboxylase of Mycobacterium ulcerans (strain Agy99).